Reading from the N-terminus, the 443-residue chain is Chromosomal replication initiator protein DnaA (443 aa).

The tract at residues 1–67 is domain I, interacts with DnaA modulators; sequence MDAWSRSLER…RELLAHFAGF (67 aa). The tract at residues 67-105 is domain II; the sequence is FSDVFLEIGSRPRPVEAQNAPFSTPSAHVSSEPQVPFAG. Residues 106 to 323 are domain III, AAA+ region; sequence NLDNHYTFAN…GALNTLTARA (218 aa). Residues glycine 151, glycine 153, lysine 154, and threonine 155 each contribute to the ATP site. Residues 324-443 are domain IV, binds dsDNA; that stretch reads NFTGRAITTE…WDKLIRKLSE (120 aa).

The protein belongs to the DnaA family. Oligomerizes as a right-handed, spiral filament on DNA at oriC.

Its subcellular location is the cytoplasm. Its function is as follows. Plays an essential role in the initiation and regulation of chromosomal replication. ATP-DnaA binds to the origin of replication (oriC) to initiate formation of the DNA replication initiation complex once per cell cycle. Binds the DnaA box (a 9 base pair repeat at the origin) and separates the double-stranded (ds)DNA. Forms a right-handed helical filament on oriC DNA; dsDNA binds to the exterior of the filament while single-stranded (ss)DNA is stabiized in the filament's interior. The ATP-DnaA-oriC complex binds and stabilizes one strand of the AT-rich DNA unwinding element (DUE), permitting loading of DNA polymerase. After initiation quickly degrades to an ADP-DnaA complex that is not apt for DNA replication. Binds acidic phospholipids. The protein is Chromosomal replication initiator protein DnaA of Stenotrophomonas maltophilia (strain R551-3).